Here is a 227-residue protein sequence, read N- to C-terminus: DNA utilization protein YhgH (227 aa).

Belongs to the ComF/GntX family.

Required for the use of extracellular DNA as a nutrient. Has been suggested to be involved in gluconate metabolism. The chain is DNA utilization protein YhgH from Escherichia coli (strain K12).